Consider the following 525-residue polypeptide: 2-isopropylmalate synthase (525 aa).

Residues 5–267 form the Pyruvate carboxyltransferase domain; it reads VIIFDTTLRD…HTGIHHQEIY (263 aa). Residues aspartate 14, histidine 202, histidine 204, and asparagine 238 each coordinate Mn(2+). Residues 392-525 form a regulatory domain region; sequence RLEYFSVQSS…NNSQDMQETV (134 aa).

Belongs to the alpha-IPM synthase/homocitrate synthase family. LeuA type 1 subfamily. Homodimer. Mn(2+) serves as cofactor.

It is found in the cytoplasm. The enzyme catalyses 3-methyl-2-oxobutanoate + acetyl-CoA + H2O = (2S)-2-isopropylmalate + CoA + H(+). It functions in the pathway amino-acid biosynthesis; L-leucine biosynthesis; L-leucine from 3-methyl-2-oxobutanoate: step 1/4. Its function is as follows. Catalyzes the condensation of the acetyl group of acetyl-CoA with 3-methyl-2-oxobutanoate (2-ketoisovalerate) to form 3-carboxy-3-hydroxy-4-methylpentanoate (2-isopropylmalate). This is 2-isopropylmalate synthase from Sodalis glossinidius (strain morsitans).